An 868-amino-acid polypeptide reads, in one-letter code: Protein NIP100 (868 aa).

The CAP-Gly domain occupies 34-84 (GETQFAKGIWYGIELDKPLGKNDGSANGIRYFDIDLKKANSNGGYYGLFCK). Coiled coils occupy residues 101–175 (LNGN…HLDN), 207–375 (LDQT…QEEL), and 645–776 (SLLS…QIKE).

In terms of assembly, component of the dynactin complex composed of at least ARP1, JNM1, NIP100 and ARP10. Dynactin comprises a short rod of the ARP1 filament attached to ARP10 at its pointed-end and probably associated with the capping protein at its barbed-end. The rod is implicated in dynein cargo binding. A sidearm formed by NIP100 projects from the ARP1 filament and is implicated in motor binding.

The protein resides in the cytoplasm. The protein localises to the cytoskeleton. Its subcellular location is the spindle pole. Its function is as follows. Motor-binding component of the dynactin complex which assists cytoplasmic dynein by increasing its processivity and by regulation of its cargo binding. The dynactin complex is required for the spindle translocation late in anaphase and is involved in a cell wall synthesis checkpoint. The chain is Protein NIP100 (NIP100) from Saccharomyces cerevisiae (strain ATCC 204508 / S288c) (Baker's yeast).